The primary structure comprises 492 residues: N-succinylglutamate 5-semialdehyde dehydrogenase (492 aa).

An NAD(+)-binding site is contributed by 220 to 225 (GSANTG). Active-site residues include glutamate 243 and cysteine 277.

This sequence belongs to the aldehyde dehydrogenase family. AstD subfamily.

It catalyses the reaction N-succinyl-L-glutamate 5-semialdehyde + NAD(+) + H2O = N-succinyl-L-glutamate + NADH + 2 H(+). Its pathway is amino-acid degradation; L-arginine degradation via AST pathway; L-glutamate and succinate from L-arginine: step 4/5. Functionally, catalyzes the NAD-dependent reduction of succinylglutamate semialdehyde into succinylglutamate. In Escherichia coli O157:H7, this protein is N-succinylglutamate 5-semialdehyde dehydrogenase.